The primary structure comprises 263 residues: MPEGPEIRRAADNLEAAIKGKPLTDVWFAFPQLKSYQSRLIGQHVTHVETRGKALLTHFSNDLTLYSHNQLYGVWRVVDTGEEPQTTRVLRVKLQTADKTILLYSASDIEMLTPEQLTTHPFLQRVGPDVLDPNLTPEVVKERLLSPRFRNRQFAGLLLDQAFLAGLGNYLRVEILWQVGLTGNHKAKDLNAAQLDALAHALLDTPRLSYATRGQVDENKYHGALFRFKVFHRDGEPCERCGGIIEKTTLSSRPFYWCPGCQH.

The active-site Schiff-base intermediate with DNA is the proline 2. The Proton donor role is filled by glutamate 3. Residue lysine 53 is the Proton donor; for beta-elimination activity of the active site. DNA-binding residues include glutamine 70, arginine 125, and asparagine 169. The segment at 229 to 263 (KVFHRDGEPCERCGGIIEKTTLSSRPFYWCPGCQH) adopts an FPG-type zinc-finger fold. Arginine 253 (proton donor; for delta-elimination activity) is an active-site residue.

This sequence belongs to the FPG family. Zn(2+) serves as cofactor.

The enzyme catalyses 2'-deoxyribonucleotide-(2'-deoxyribose 5'-phosphate)-2'-deoxyribonucleotide-DNA = a 3'-end 2'-deoxyribonucleotide-(2,3-dehydro-2,3-deoxyribose 5'-phosphate)-DNA + a 5'-end 5'-phospho-2'-deoxyribonucleoside-DNA + H(+). In terms of biological role, involved in base excision repair of DNA damaged by oxidation or by mutagenic agents. Acts as a DNA glycosylase that recognizes and removes damaged bases. Has a preference for oxidized pyrimidines, such as thymine glycol, 5,6-dihydrouracil and 5,6-dihydrothymine. Has AP (apurinic/apyrimidinic) lyase activity and introduces nicks in the DNA strand. Cleaves the DNA backbone by beta-delta elimination to generate a single-strand break at the site of the removed base with both 3'- and 5'-phosphates. The chain is Endonuclease 8 from Escherichia coli (strain UTI89 / UPEC).